Reading from the N-terminus, the 824-residue chain is Molybdenum cofactor sulfurase (824 aa).

Residue K274 is modified to N6-(pyridoxal phosphate)lysine. C433 is a catalytic residue. The region spanning 655-822 is the MOSC domain; it reads CSSSKYRSCT…LQVGQQVYPS (168 aa).

The protein belongs to the class-V pyridoxal-phosphate-dependent aminotransferase family. MOCOS subfamily. Pyridoxal 5'-phosphate serves as cofactor.

It carries out the reaction Mo-molybdopterin + L-cysteine + AH2 = thio-Mo-molybdopterin + L-alanine + A + H2O. The protein operates within cofactor biosynthesis; molybdopterin biosynthesis. Its function is as follows. Sulfurates the molybdenum cofactor. Sulfation of molybdenum is essential for xanthine dehydrogenase (XDH) and aldehyde oxidase (ADO) enzymes in which molybdenum cofactor is liganded by 1 oxygen and 1 sulfur atom in active form. The protein is Molybdenum cofactor sulfurase (MCSU3) of Oryza sativa subsp. japonica (Rice).